The chain runs to 77 residues: Large ribosomal subunit protein bL31 (77 aa).

Cys-16, Cys-18, Cys-37, and Cys-40 together coordinate Zn(2+).

It belongs to the bacterial ribosomal protein bL31 family. Type A subfamily. Part of the 50S ribosomal subunit. Zn(2+) serves as cofactor.

Functionally, binds the 23S rRNA. The protein is Large ribosomal subunit protein bL31 of Pseudomonas fluorescens (strain SBW25).